A 285-amino-acid chain; its full sequence is Phosphatidylserine decarboxylase proenzyme (285 aa).

Residues Asp89, His146, and Ser252 each act as charge relay system; for autoendoproteolytic cleavage activity in the active site. Ser252 functions as the Schiff-base intermediate with substrate; via pyruvic acid; for decarboxylase activity in the catalytic mechanism. Residue Ser252 is modified to Pyruvic acid (Ser); by autocatalysis.

The protein belongs to the phosphatidylserine decarboxylase family. PSD-B subfamily. Prokaryotic type I sub-subfamily. In terms of assembly, heterodimer of a large membrane-associated beta subunit and a small pyruvoyl-containing alpha subunit. Requires pyruvate as cofactor. Post-translationally, is synthesized initially as an inactive proenzyme. Formation of the active enzyme involves a self-maturation process in which the active site pyruvoyl group is generated from an internal serine residue via an autocatalytic post-translational modification. Two non-identical subunits are generated from the proenzyme in this reaction, and the pyruvate is formed at the N-terminus of the alpha chain, which is derived from the carboxyl end of the proenzyme. The autoendoproteolytic cleavage occurs by a canonical serine protease mechanism, in which the side chain hydroxyl group of the serine supplies its oxygen atom to form the C-terminus of the beta chain, while the remainder of the serine residue undergoes an oxidative deamination to produce ammonia and the pyruvoyl prosthetic group on the alpha chain. During this reaction, the Ser that is part of the protease active site of the proenzyme becomes the pyruvoyl prosthetic group, which constitutes an essential element of the active site of the mature decarboxylase.

The protein resides in the cell membrane. It catalyses the reaction a 1,2-diacyl-sn-glycero-3-phospho-L-serine + H(+) = a 1,2-diacyl-sn-glycero-3-phosphoethanolamine + CO2. Its pathway is phospholipid metabolism; phosphatidylethanolamine biosynthesis; phosphatidylethanolamine from CDP-diacylglycerol: step 2/2. Its function is as follows. Catalyzes the formation of phosphatidylethanolamine (PtdEtn) from phosphatidylserine (PtdSer). The sequence is that of Phosphatidylserine decarboxylase proenzyme from Vibrio cholerae serotype O1 (strain ATCC 39541 / Classical Ogawa 395 / O395).